Consider the following 463-residue polypeptide: Glutamate--tRNA ligase 1 (463 aa).

A 'HIGH' region motif is present at residues 11–21 (PSPTGYLHIGG). The 'KMSKS' region motif lies at 240–244 (KLSKR). Position 243 (Lys243) interacts with ATP.

This sequence belongs to the class-I aminoacyl-tRNA synthetase family. Glutamate--tRNA ligase type 1 subfamily. In terms of assembly, monomer.

Its subcellular location is the cytoplasm. The catalysed reaction is tRNA(Glu) + L-glutamate + ATP = L-glutamyl-tRNA(Glu) + AMP + diphosphate. In terms of biological role, catalyzes the attachment of glutamate to tRNA(Glu) in a two-step reaction: glutamate is first activated by ATP to form Glu-AMP and then transferred to the acceptor end of tRNA(Glu). This Campylobacter jejuni subsp. doylei (strain ATCC BAA-1458 / RM4099 / 269.97) protein is Glutamate--tRNA ligase 1.